We begin with the raw amino-acid sequence, 462 residues long: WD repeat-containing protein WRAP73 (462 aa).

4 WD repeats span residues 46–86, 89–129, 176–210, and 221–260; these read TCLD…WHCK, EGSA…VSYI, TDTQ…YSLD, and EWSL…MITE. Phosphoserine is present on Ser281. 2 WD repeats span residues 328–369 and 371–410; these read NPRM…LFVV and EHMS…SVQV.

In terms of assembly, interacts with SSX2IP. As to expression, ubiquitous.

It is found in the cytoplasm. The protein localises to the cytoskeleton. It localises to the microtubule organizing center. Its subcellular location is the centrosome. In terms of biological role, the SSX2IP:WRAP73 complex is proposed to act as regulator of spindle anchoring at the mitotic centrosome. Required for the centrosomal localization of SSX2IP and normal mitotic bipolar spindle morphology. Required for the targeting of centriole satellite proteins to centrosomes such as of PCM1, SSX2IP, CEP290 and PIBF1/CEP90. Required for ciliogenesis and involved in the removal of the CEP97:CCP110 complex from the mother centriole. Involved in ciliary vesicle formation at the mother centriole and required for the docking of vesicles to the basal body during ciliogenesis; may promote docking of RAB8A- and ARL13B-containing vesicles. This Mus musculus (Mouse) protein is WD repeat-containing protein WRAP73 (Wrap73).